A 314-amino-acid chain; its full sequence is DNA-directed RNA polymerase subunit alpha (314 aa).

The alpha N-terminal domain (alpha-NTD) stretch occupies residues 1–228 (MIEIEKPKIE…EHLNIFVGLT (228 aa)). An alpha C-terminal domain (alpha-CTD) region spans residues 245–314 (KEKVLEMTIE…ELGLGLRKDD (70 aa)).

Belongs to the RNA polymerase alpha chain family. Homodimer. The RNAP catalytic core consists of 2 alpha, 1 beta, 1 beta' and 1 omega subunit. When a sigma factor is associated with the core the holoenzyme is formed, which can initiate transcription.

The enzyme catalyses RNA(n) + a ribonucleoside 5'-triphosphate = RNA(n+1) + diphosphate. DNA-dependent RNA polymerase catalyzes the transcription of DNA into RNA using the four ribonucleoside triphosphates as substrates. The polypeptide is DNA-directed RNA polymerase subunit alpha (Bacillus thuringiensis (strain Al Hakam)).